Consider the following 199-residue polypeptide: dITP/XTP pyrophosphatase (199 aa).

Substrate is bound at residue Ser-12 to Lys-17. The active-site Proton acceptor is the Asp-73. A Mg(2+)-binding site is contributed by Asp-73. Substrate contacts are provided by residues Ser-74, Phe-157–Asp-160, Lys-180, and His-185–Arg-186.

This sequence belongs to the HAM1 NTPase family. Homodimer. It depends on Mg(2+) as a cofactor.

It carries out the reaction XTP + H2O = XMP + diphosphate + H(+). The catalysed reaction is dITP + H2O = dIMP + diphosphate + H(+). The enzyme catalyses ITP + H2O = IMP + diphosphate + H(+). Functionally, pyrophosphatase that catalyzes the hydrolysis of nucleoside triphosphates to their monophosphate derivatives, with a high preference for the non-canonical purine nucleotides XTP (xanthosine triphosphate), dITP (deoxyinosine triphosphate) and ITP. Seems to function as a house-cleaning enzyme that removes non-canonical purine nucleotides from the nucleotide pool, thus preventing their incorporation into DNA/RNA and avoiding chromosomal lesions. The protein is dITP/XTP pyrophosphatase of Neisseria meningitidis serogroup B (strain ATCC BAA-335 / MC58).